The sequence spans 418 residues: Probable serine hydroxymethyltransferase (418 aa).

Residues Leu118 and 122-124 (GHL) contribute to the (6S)-5,6,7,8-tetrahydrofolate site. Lys226 carries the post-translational modification N6-(pyridoxal phosphate)lysine. Residue 351–353 (SPF) participates in (6S)-5,6,7,8-tetrahydrofolate binding.

This sequence belongs to the SHMT family. As to quaternary structure, homodimer. It depends on pyridoxal 5'-phosphate as a cofactor.

The protein resides in the cytoplasm. It carries out the reaction (6R)-5,10-methylene-5,6,7,8-tetrahydrofolate + glycine + H2O = (6S)-5,6,7,8-tetrahydrofolate + L-serine. It functions in the pathway one-carbon metabolism; tetrahydrofolate interconversion. Functionally, catalyzes the reversible interconversion of serine and glycine with tetrahydrofolate (THF) serving as the one-carbon carrier. This reaction serves as the major source of one-carbon groups required for the biosynthesis of purines, thymidylate, methionine, and other important biomolecules. In Mesomycoplasma hyopneumoniae (strain 232) (Mycoplasma hyopneumoniae), this protein is Probable serine hydroxymethyltransferase.